A 469-amino-acid chain; its full sequence is Probable periplasmic serine endoprotease DegP-like (469 aa).

A signal peptide spans 1 to 25; it reads MKVCQKYTAVLLVWLSAVVSMRAGA. Active-site charge relay system residues include His-108, Asp-138, and Ser-211. Substrate contacts are provided by residues 209 to 211 and 266 to 270; these read GNS and LGVLI. PDZ domains are found at residues 255–346 and 352–457; these read LKDT…VRRG and AVEI…IRQG.

It belongs to the peptidase S1C family.

It is found in the periplasm. The catalysed reaction is Acts on substrates that are at least partially unfolded. The cleavage site P1 residue is normally between a pair of hydrophobic residues, such as Val-|-Val.. Functionally, might be efficient in the degradation of transiently denatured and unfolded proteins which accumulate in the periplasm following stress conditions. In Hahella chejuensis (strain KCTC 2396), this protein is Probable periplasmic serine endoprotease DegP-like (mucD).